Reading from the N-terminus, the 1372-residue chain is Polysaccharide lyase 8 family protein HylA (1372 aa).

The first 25 residues, 1–25, serve as a signal peptide directing secretion; it reads MIKKIIVVVAFMLTGFSLTAMSASA. Residues 63–172 enclose the F5/8 type C domain; that stretch reads DGDETTRWSA…SIISFEAYEK (110 aa). The BIG2 domain occupies 183–242; sequence TENLTISEKRKQQLAFEVSPAGVDITEDQIEWSSSDPTIVTVDQTGNLTAVKSGEAKVTV. Residues H487, Y496, and R550 contribute to the active site. 4 consecutive FIVAR domains span residues 1014–1075, 1084–1146, 1155–1217, and 1226–1288; these read KEAL…VKQL, DKTN…VKQL, and DKTN…VKRL. The segment at 1288 to 1336 is disordered; sequence LTLKNSGENKKEQKNGGNNGHLNTSTGVDQTGTKQVKPSSQGGFRKASQ. Over residues 1308–1329 the composition is skewed to polar residues; sequence HLNTSTGVDQTGTKQVKPSSQG. The LPXTG sorting signal motif lies at 1338–1342; that stretch reads LPSTG. Pentaglycyl murein peptidoglycan amidated threonine is present on T1341. The propeptide at 1342-1372 is removed by sortase; it reads GEKKSIALVIIGLLVIASGCLLVFRKSKSKK.

This sequence belongs to the polysaccharide lyase 8 family.

It localises to the secreted. Its subcellular location is the cell wall. In terms of biological role, has a very modest degradation activity against heparin sodium salt (HS) in vitro. Involved in the pathogenesis of vancomycin-resistant E.faecalis infections. This is Polysaccharide lyase 8 family protein HylA from Enterococcus faecalis (strain ATCC 700802 / V583).